The primary structure comprises 124 residues: Small ribosomal subunit protein uS12c (124 aa).

This sequence belongs to the universal ribosomal protein uS12 family. In terms of assembly, part of the 30S ribosomal subunit.

The protein localises to the plastid. Functionally, with S4 and S5 plays an important role in translational accuracy. Located at the interface of the 30S and 50S subunits. This chain is Small ribosomal subunit protein uS12c (rps12), found in Helicosporidium sp. subsp. Simulium jonesii (Green alga).